The chain runs to 146 residues: Probable trivalent organoarsenical cleaving enzyme (146 aa).

The region spanning 2-118 (KYVHVGVNVV…DGNEWEFFYT (117 aa)) is the VOC domain. H5 and H62 together coordinate Fe(2+). Roxarsone (III)-binding residues include C95 and C96. E114 contacts Fe(2+).

This sequence to M.tuberculosis Rv2641. Requires Fe(2+) as cofactor.

It catalyses the reaction methylarsonous acid + AH2 + O2 = arsenite + methanol + A + H(+). The enzyme catalyses roxarsone (III) + AH2 + O2 = 4-hydroxy-3-nitrocyclohexa-2,5-dien-1-one + arsenite + A + H(+). The catalysed reaction is nitarsone (III) + AH2 + O2 = 4-nitrocyclohexa-2,5-dien-1-one + arsenite + A + H(+). It carries out the reaction 4-aminophenylarsonous acid + AH2 + O2 = 4-aminocyclohexa-2,5-dien-1-one + arsenite + A. In terms of biological role, nonheme iron-dependent dioxygenase that can break carbon-arsenic bonds, playing a role in the detoxification of environmental organoarsenical compounds. Catalyzes the oxygen-dependent demethylation of highly toxic methylarsonous acid (MAs(III)) to arsenite, which can then be exported out of the cell. Can also cleave the C-As bond in several trivalent aromatic arsenicals, including roxarsone (III), nitarsone (III) and (4-aminophenyl)arsonous acid. Organoarsenical degradation by this enzyme is proposed to have a significant impact on the arsenic biogeocycle that maintains a balance between organic and inorganic species. This is Probable trivalent organoarsenical cleaving enzyme (yqcK) from Bacillus subtilis (strain 168).